Here is an 811-residue protein sequence, read N- to C-terminus: Bifunctional enzyme MurC/Ddl (811 aa).

Positions 1–450 (MNRKNHYHFI…GNALKDFEPK (450 aa)) are UDP-N-acetylmuramate--alanine ligase. Residues 111–117 (GSHGKTT) and 607–662 (LETF…SREI) each bind ATP. The D-alanine--D-alanine ligase stretch occupies residues 451–811 (KLSVGVVCGG…NKQCLLTAKS (361 aa)). One can recognise an ATP-grasp domain in the interval 574–785 (KRLAASVGVP…FEQIVHQLII (212 aa)). Residues Asp-739, Glu-752, and Asn-754 each contribute to the Mg(2+) site.

The protein in the N-terminal section; belongs to the MurCDEF family. This sequence in the C-terminal section; belongs to the D-alanine--D-alanine ligase family. The cofactor is Mg(2+). Mn(2+) serves as cofactor.

Its subcellular location is the cytoplasm. It carries out the reaction UDP-N-acetyl-alpha-D-muramate + L-alanine + ATP = UDP-N-acetyl-alpha-D-muramoyl-L-alanine + ADP + phosphate + H(+). The catalysed reaction is 2 D-alanine + ATP = D-alanyl-D-alanine + ADP + phosphate + H(+). It participates in cell wall biogenesis; peptidoglycan biosynthesis. The chain is Bifunctional enzyme MurC/Ddl (murC/ddlA) from Chlamydia caviae (strain ATCC VR-813 / DSM 19441 / 03DC25 / GPIC) (Chlamydophila caviae).